Here is a 219-residue protein sequence, read N- to C-terminus: UPF0502 protein Gura_0277 (219 aa).

The protein belongs to the UPF0502 family.

This chain is UPF0502 protein Gura_0277, found in Geotalea uraniireducens (strain Rf4) (Geobacter uraniireducens).